The sequence spans 96 residues: Small ribosomal subunit protein bS6 (96 aa).

The protein belongs to the bacterial ribosomal protein bS6 family.

Binds together with bS18 to 16S ribosomal RNA. The chain is Small ribosomal subunit protein bS6 from Bacillus thuringiensis subsp. konkukian (strain 97-27).